A 503-amino-acid chain; its full sequence is MVQGTASSVGKSLLTAALCRIFNEDGYRVVPFKSQNMALNSFVTEEGLEMGRAQVFQAEAARIKPQVKMNPILLKPTADSHAQVIIQGAVHGNMTAQEYHQFKPQLKSMLRDIYLDLETSNDIVVIEGAGSPAEINLRDQDIVNMGMAEIADSPVILVGDIDRGGVFASLYGTIMLLEESERSRVKGILINKFRGDLKILEPGLKMLEELINIPVIGVIPYERFDIEDEDSLSDRLQQKNHQESDISIAIIRLPHISNFTDFHLLEQMEGVNVNYIGRNQSIGRPDMIIIPGSKNTIGDLKYLQEVGLAAEIIEVHKTGTMICGICGGYQMLGNRILDPNHVESPEGEIQGLGLLDVETNFESEKVTTQVSGKILDHKLLEEIECGGIEVKGYEIHMGRTLRGATIKPFVKIEERLSKPVDDFDGAINEAGTVFGTYLHGIFDEISLVEKIINGLLMKKGLPTIQQRNCSLEELKDREYSRLAKVVRENIDMKYIYKILEGEA.

The GATase cobBQ-type domain occupies 245 to 447 (DISIAIIRLP…LHGIFDEISL (203 aa)). The active-site Nucleophile is cysteine 326. The active site involves histidine 439.

It belongs to the CobB/CobQ family. CobQ subfamily.

It functions in the pathway cofactor biosynthesis; adenosylcobalamin biosynthesis. Its function is as follows. Catalyzes amidations at positions B, D, E, and G on adenosylcobyrinic A,C-diamide. NH(2) groups are provided by glutamine, and one molecule of ATP is hydrogenolyzed for each amidation. This chain is Cobyric acid synthase, found in Alkaliphilus metalliredigens (strain QYMF).